An 857-amino-acid polypeptide reads, in one-letter code: Gelation factor (857 aa).

A Blocked amino end (Met) modification is found at methionine 1. Positions methionine 1–alanine 250 are actin-binding. 2 consecutive Calponin-homology (CH) domains span residues aspartate 12–glutamine 117 and asparagine 125–leucine 227. Positions lysine 229 to glutamate 246 are regulatory site. Filamin repeat units follow at residues arginine 245–isoleucine 346, aspartate 347–isoleucine 446, leucine 447–isoleucine 545, lysine 546–valine 645, lysine 646–cysteine 747, and phenylalanine 763–leucine 837. Positions proline 832 to asparagine 857 are disordered.

Homodimer.

F-actin cross-linking protein. In Dictyostelium discoideum (Social amoeba), this protein is Gelation factor (abpC).